A 202-amino-acid chain; its full sequence is Orotate phosphoribosyltransferase (202 aa).

5-phospho-alpha-D-ribose 1-diphosphate is bound by residues R94, K98, H100, and 120 to 128; that span reads EDLISTGGS. S124 is an orotate binding site.

It belongs to the purine/pyrimidine phosphoribosyltransferase family. PyrE subfamily. Homodimer. Requires Mg(2+) as cofactor.

The enzyme catalyses orotidine 5'-phosphate + diphosphate = orotate + 5-phospho-alpha-D-ribose 1-diphosphate. The protein operates within pyrimidine metabolism; UMP biosynthesis via de novo pathway; UMP from orotate: step 1/2. Functionally, catalyzes the transfer of a ribosyl phosphate group from 5-phosphoribose 1-diphosphate to orotate, leading to the formation of orotidine monophosphate (OMP). The polypeptide is Orotate phosphoribosyltransferase (Staphylococcus haemolyticus (strain JCSC1435)).